The chain runs to 154 residues: Large ribosomal subunit protein uL11 (154 aa).

This sequence belongs to the universal ribosomal protein uL11 family. Part of the ribosomal stalk of the 50S ribosomal subunit. Interacts with L10 and the large rRNA to form the base of the stalk. L10 forms an elongated spine to which L12 dimers bind in a sequential fashion forming a multimeric L10(L12)X complex. One or more lysine residues are methylated.

Its function is as follows. Forms part of the ribosomal stalk which helps the ribosome interact with GTP-bound translation factors. This chain is Large ribosomal subunit protein uL11, found in Leuconostoc mesenteroides subsp. mesenteroides (strain ATCC 8293 / DSM 20343 / BCRC 11652 / CCM 1803 / JCM 6124 / NCDO 523 / NBRC 100496 / NCIMB 8023 / NCTC 12954 / NRRL B-1118 / 37Y).